An 840-amino-acid polypeptide reads, in one-letter code: Mechanosensitive ion channel protein Msy2 (840 aa).

At 1 to 68 (MNEHRREPHR…WFNNLSFITR (68 aa)) the chain is on the cytoplasmic side. Residues 69-89 (WITIWFPLAGALVIPLAVGVS) traverse the membrane as a helical segment. Over 90–100 (PYPNAKLGGVR) the chain is Lumenal. Residues 101–121 (IFWIFVWLEVAWGGFWVSRVI) form a helical membrane-spanning segment. At 122-126 (ARLLP) the chain is on the cytoplasmic side. A helical membrane pass occupies residues 127-147 (YILYPLMGILPFTMYKYTVIL). The Lumenal segment spans residues 148 to 151 (TALE). The chain crosses the membrane as a helical span at residues 152–172 (MPLAIFFCSIVCVCTFSPIMI). Over 173–225 (GKGNFTSTTVTTTTSATATPTASASSNAVESVFVTKTAASVPSWIKVITKILG) the chain is Cytoplasmic. A helical membrane pass occupies residues 226–246 (AAVVTSIVLLLEKIFLHFIGF). Topologically, residues 247–449 (HYHEVQYQYR…LALGKLDRVG (203 aa)) are lumenal. The EF-hand domain maps to 392 to 427 (IPDDEINDIFHILDNDYSRTVTLDEMEQFTREISIE). Residues 450–491 (LGVVGIIAVLTFISFLDTSFATILAAFGTTLLSLSFVFSTSA) traverse the membrane as a helical segment. Over 492-840 (QELMSSIIFL…SQNMDGQIQY (349 aa)) the chain is Cytoplasmic. 2 disordered regions span residues 677-730 (EYSK…KRED) and 775-819 (ESNG…NTQA). Residues 688–700 (SDISSTASSNSLS) are compositionally biased toward low complexity. Residues 708 to 730 (SESRNYHTHDEDNSSDDNHKRED) show a composition bias toward basic and acidic residues. Low complexity predominate over residues 776–819 (SNGNANGDNTATNSQGATDNGQTTTNTTQNNVDNTQATTDNTQA).

The protein belongs to the MscS (TC 1.A.23) family.

The protein resides in the endoplasmic reticulum membrane. In terms of biological role, regulates intracellular calcium levels and cell volume for survival in response to hypo-osmotic shock. Involved in maintaining vacuole integrity and protecting the nuclear envelope upon hypo-osmotic shock. The chain is Mechanosensitive ion channel protein Msy2 from Schizosaccharomyces pombe (strain 972 / ATCC 24843) (Fission yeast).